A 391-amino-acid polypeptide reads, in one-letter code: Suppressor APC domain-containing protein 2 (391 aa).

The disordered stretch occupies residues 1–20 (MAVAAMAERGRLSHAAPAPS). Thr218 is modified (phosphothreonine). Residues 226–277 (SLLKQMKELDQEQEVLLQGLEMMARGRDWYQQQLQRVQERQRRLSQSRAAAD) adopt a coiled-coil conformation. Ser283 is modified (phosphoserine). A coiled-coil region spans residues 340–381 (LKEQNRLLTQEVTDKSERITQLEQEKSALIKQLFEARALSQQ).

In terms of assembly, interacts with a spindle orientation complex at least composed of GNAI1, GPSM2 and NUMA1. Interacts with GPSM2 (via TPR motifs); this interaction is required to prevent GPSM2 anchoring at the mitotic apical cortex and is inhibited in presence of NUMA1 in a dose dependent manner. Interacts with PARD3. Expressed in the retina. Expressed in retinal progenitor cells and newly differentiated neurons but not in mature retinal cells (at protein level).

Its subcellular location is the cytoplasm. The protein resides in the nucleus. It localises to the cell cortex. The protein localises to the apical cell membrane. It is found in the cell junction. Its subcellular location is the tight junction. In terms of biological role, plays a role in planar mitotic spindle orientation in retinal progenitor cells (RPCs) and promotes the production of symmetric terminal divisions. Negatively regulates the mitotic apical cortex localization of GPSM2. Involved also in positive regulation of cell proliferation and tumor cell growth. The chain is Suppressor APC domain-containing protein 2 from Mus musculus (Mouse).